We begin with the raw amino-acid sequence, 289 residues long: 4-diphosphocytidyl-2-C-methyl-D-erythritol kinase (289 aa).

K11 is an active-site residue. P95–S105 contributes to the ATP binding site. Residue D137 is part of the active site.

The protein belongs to the GHMP kinase family. IspE subfamily.

The enzyme catalyses 4-CDP-2-C-methyl-D-erythritol + ATP = 4-CDP-2-C-methyl-D-erythritol 2-phosphate + ADP + H(+). The protein operates within isoprenoid biosynthesis; isopentenyl diphosphate biosynthesis via DXP pathway; isopentenyl diphosphate from 1-deoxy-D-xylulose 5-phosphate: step 3/6. Catalyzes the phosphorylation of the position 2 hydroxy group of 4-diphosphocytidyl-2C-methyl-D-erythritol. This is 4-diphosphocytidyl-2-C-methyl-D-erythritol kinase from Aeromonas salmonicida (strain A449).